Reading from the N-terminus, the 348-residue chain is Guanine nucleotide-binding protein alpha-13 subunit (348 aa).

The N-myristoyl glycine moiety is linked to residue glycine 2. Cysteine 3 carries S-palmitoyl cysteine lipidation. Residues serine 34 to lysine 348 form the G-alpha domain. Positions arginine 37 to threonine 50 are G1 motif. Residues glycine 42–threonine 49, isoleucine 176–threonine 182, aspartate 201–glutamine 205, asparagine 270–aspartate 273, and alanine 326 each bind GTP. The G2 motif stretch occupies residues aspartate 174–threonine 182. Threonine 182 contacts Mg(2+). The tract at residues phenylalanine 197–lysine 206 is G3 motif. Residues tyrosine 266 to aspartate 273 form a G4 motif region. Residues cysteine 324–threonine 329 are G5 motif.

This sequence belongs to the G-alpha family. As to quaternary structure, g proteins are composed of 3 units; alpha, beta and gamma. The alpha chain contains the guanine nucleotide binding site.

Its function is as follows. Guanine nucleotide-binding proteins (G proteins) are involved as modulators or transducers in various transmembrane signaling systems. In Caenorhabditis elegans, this protein is Guanine nucleotide-binding protein alpha-13 subunit (gpa-13).